Here is a 1030-residue protein sequence, read N- to C-terminus: Isoleucine--tRNA ligase 2 (1030 aa).

Positions 48 to 58 match the 'HIGH' region motif; that stretch reads PFATGLPHYGH. The 'KMSKS' region motif lies at 589-593; the sequence is KMSKR. Lysine 592 contributes to the ATP binding site.

Belongs to the class-I aminoacyl-tRNA synthetase family. IleS type 2 subfamily. Monomer. The cofactor is Zn(2+).

It is found in the cytoplasm. It catalyses the reaction tRNA(Ile) + L-isoleucine + ATP = L-isoleucyl-tRNA(Ile) + AMP + diphosphate. Its function is as follows. Catalyzes the attachment of isoleucine to tRNA(Ile). As IleRS can inadvertently accommodate and process structurally similar amino acids such as valine, to avoid such errors it has two additional distinct tRNA(Ile)-dependent editing activities. One activity is designated as 'pretransfer' editing and involves the hydrolysis of activated Val-AMP. The other activity is designated 'posttransfer' editing and involves deacylation of mischarged Val-tRNA(Ile). Confers high-level resistance to the antibiotic mupirocin (pseudomonic acid A), an Ile-analog produced by P.fluorescens NCIMB 10586 itself that competitively inhibits activation by Ile-tRNA synthetase, thus inhibiting protein biosynthesis. The sequence is that of Isoleucine--tRNA ligase 2 (ileS2) from Pseudomonas fluorescens.